The chain runs to 200 residues: A-type ATP synthase subunit E (200 aa).

This sequence belongs to the V-ATPase E subunit family. In terms of assembly, has multiple subunits with at least A(3), B(3), C, D, E, F, H, I and proteolipid K(x).

It is found in the cell membrane. Component of the A-type ATP synthase that produces ATP from ADP in the presence of a proton gradient across the membrane. This is A-type ATP synthase subunit E from Aeropyrum pernix (strain ATCC 700893 / DSM 11879 / JCM 9820 / NBRC 100138 / K1).